Reading from the N-terminus, the 104-residue chain is Thioredoxin (104 aa).

A Thioredoxin domain is found at 2 to 104 (KQVSDASFEE…KLFEWVEASV (103 aa)). An intrachain disulfide couples Cys29 to Cys32.

It belongs to the thioredoxin family.

In terms of biological role, participates in various redox reactions through the reversible oxidation of its active center dithiol to a disulfide and catalyzes dithiol-disulfide exchange reactions. In Rhodospirillum rubrum, this protein is Thioredoxin (trxA).